Here is a 130-residue protein sequence, read N- to C-terminus: Phosphomevalonate dehydratase small subunit (130 aa).

Ser-62 functions as the Proton acceptor in the catalytic mechanism.

Belongs to the AcnX type II small subunit family. Heterodimer composed of a large subunit (PMDh-L) and a small subunit (PMDh-S).

The catalysed reaction is (R)-5-phosphomevalonate = (2E)-3-methyl-5-phosphooxypent-2-enoate + H2O. The protein operates within isoprenoid biosynthesis; isopentenyl diphosphate biosynthesis via mevalonate pathway. Component of a hydro-lyase that catalyzes the dehydration of mevalonate 5-phosphate (MVA5P) to form trans-anhydromevalonate 5-phosphate (tAHMP). Involved in the archaeal mevalonate (MVA) pathway, which provides fundamental precursors for isoprenoid biosynthesis, such as isopentenyl diphosphate (IPP) and dimethylallyl diphosphate (DMAPP). The chain is Phosphomevalonate dehydratase small subunit from Thermococcus sibiricus (strain DSM 12597 / MM 739).